Here is a 577-residue protein sequence, read N- to C-terminus: MMTINNNNLNNSNNINNNNNIYTSNNNNNNNNYLIQTVPTMSETFDHMIETPQNDYISIHNHNQHNNHSPHQFYNNQYQHYQYTNDLIKLQPFCEINGQNDFQNSYQDPYQHQLSPPDMVGPYVNSYSNNSNNTNLIQNNNNQQLPSIITSPTIPLPPSPPSPTIINNSNNTISTIQFVNNKKRQHSDTTSSSSIYFIQQPHSTSTPFSLQCPNSPNSTSSSPLNSINYSYHPTFRVVTSSSSSASSSSTSSQPPSPQTLLSSSSISISNSSSFYNNTEASDEEMEEQFKEYLSPTISNLIESSHRENILNLVNDYLYEELPLKSLLMELREIQYQLGNGQNQSLLNNLIELFLILDNSSNVMINFLKENGVEDSEITIDQKRLSIILNDFENGLRGKDKTIKKSTSRGLRNPPNKWTKEESSKLITLVHENGDKQWKKIALQIGGGKTGAQCAQHWKRVLCPAIRKGSWDEEEEAKLFLLVEKHGQSWKNVASEIRTRTDIQCRYQYFKSCMSREVPWTPKEDEILQKKVIENKQDSTKEIGWMDLSKAMARARQTKIPRTALECKIRFYFLNAQL.

Disordered regions lie at residues 1–23, 206–225, and 240–264; these read MMTI…NIYT, TPFS…SPLN, and SSSS…LSSS. Residues 213 to 225 show a composition bias toward low complexity; that stretch reads PNSPNSTSSSPLN. HTH myb-type domains follow at residues 403–465 and 466–517; these read KKST…CPAI and RKGS…SREV. DNA-binding regions (H-T-H motif) lie at residues 437 to 461 and 489 to 513; these read WKKI…KRVL and WKNV…KSCM. One can recognise a Myb-like domain in the interval 518–570; that stretch reads PWTPKEDEILQKKVIENKQDSTKEIGWMDLSKAMARARQTKIPRTALECKIRF.

The protein localises to the nucleus. The polypeptide is Myb-like protein N (mybN) (Dictyostelium discoideum (Social amoeba)).